Reading from the N-terminus, the 363-residue chain is tRNA/tmRNA (uracil-C(5))-methyltransferase (363 aa).

The S-adenosyl-L-methionine site is built by Gln-187, Tyr-215, Asn-220, Glu-236, and Asp-296. Residue Cys-321 is the Nucleophile of the active site. Glu-355 (proton acceptor) is an active-site residue.

Belongs to the class I-like SAM-binding methyltransferase superfamily. RNA M5U methyltransferase family. TrmA subfamily.

The enzyme catalyses uridine(54) in tRNA + S-adenosyl-L-methionine = 5-methyluridine(54) in tRNA + S-adenosyl-L-homocysteine + H(+). It catalyses the reaction uridine(341) in tmRNA + S-adenosyl-L-methionine = 5-methyluridine(341) in tmRNA + S-adenosyl-L-homocysteine + H(+). In terms of biological role, dual-specificity methyltransferase that catalyzes the formation of 5-methyluridine at position 54 (m5U54) in all tRNAs, and that of position 341 (m5U341) in tmRNA (transfer-mRNA). This is tRNA/tmRNA (uracil-C(5))-methyltransferase from Pseudomonas aeruginosa (strain ATCC 15692 / DSM 22644 / CIP 104116 / JCM 14847 / LMG 12228 / 1C / PRS 101 / PAO1).